The primary structure comprises 610 residues: Elongation factor 4 (610 aa).

One can recognise a tr-type G domain in the interval Glu11–Ser193. GTP is bound by residues Asp23–Thr28 and Asn140–Asp143.

Belongs to the TRAFAC class translation factor GTPase superfamily. Classic translation factor GTPase family. LepA subfamily.

The protein resides in the cell membrane. The enzyme catalyses GTP + H2O = GDP + phosphate + H(+). Its function is as follows. Required for accurate and efficient protein synthesis under certain stress conditions. May act as a fidelity factor of the translation reaction, by catalyzing a one-codon backward translocation of tRNAs on improperly translocated ribosomes. Back-translocation proceeds from a post-translocation (POST) complex to a pre-translocation (PRE) complex, thus giving elongation factor G a second chance to translocate the tRNAs correctly. Binds to ribosomes in a GTP-dependent manner. The protein is Elongation factor 4 of Streptococcus uberis (strain ATCC BAA-854 / 0140J).